The chain runs to 693 residues: Elongation factor G (693 aa).

A tr-type G domain is found at 8–284 (DMTRNVGIMA…AIVNYMPAPT (277 aa)). GTP is bound by residues 17–24 (AHIDAGKT), 81–85 (DTPGH), and 135–138 (NKMD).

This sequence belongs to the TRAFAC class translation factor GTPase superfamily. Classic translation factor GTPase family. EF-G/EF-2 subfamily.

Its subcellular location is the cytoplasm. In terms of biological role, catalyzes the GTP-dependent ribosomal translocation step during translation elongation. During this step, the ribosome changes from the pre-translocational (PRE) to the post-translocational (POST) state as the newly formed A-site-bound peptidyl-tRNA and P-site-bound deacylated tRNA move to the P and E sites, respectively. Catalyzes the coordinated movement of the two tRNA molecules, the mRNA and conformational changes in the ribosome. In Fusobacterium nucleatum subsp. nucleatum (strain ATCC 25586 / DSM 15643 / BCRC 10681 / CIP 101130 / JCM 8532 / KCTC 2640 / LMG 13131 / VPI 4355), this protein is Elongation factor G.